Here is a 1300-residue protein sequence, read N- to C-terminus: uncharacterized protein (1300 aa).

A disordered region spans residues 1–1205; that stretch reads MVLLRSGLGT…GKTLGLDPLY (1205 aa). Residues 51–69 show a composition bias toward basic residues; that stretch reads GRKRKKGPKKSGGKKKKRK. A compositionally biased stretch (gly residues) spans 73–143; it reads EGPGGGEGPG…GPGGGEGPGG (71 aa). A compositionally biased stretch (basic residues) spans 145–165; the sequence is SRKRKRGDGSKKHGGKKKKKT. Residues 237–246 are compositionally biased toward low complexity; sequence PDGPGAQEGP. Positions 250–270 are enriched in acidic residues; the sequence is EGPEGDEGPEGPEGPEGEGPE. Residues 280–289 are compositionally biased toward low complexity; sequence PDGPGAQEGP. Acidic residues-rich tracts occupy residues 295 to 343 and 357 to 417; these read PDED…DSPD and PDED…EGDS. Residues 418-427 are compositionally biased toward low complexity; that stretch reads PDGPGAQEGP. Composition is skewed to acidic residues over residues 431-469, 477-494, 517-558, and 581-630; these read EGPE…PEGE, PEGE…EGPE, EGPE…EGPE, and EGPE…EGDS. The span at 674–686 shows a compositional bias: gly residues; that stretch reads SGPGSSEGEGPSG. Acidic residues-rich tracts occupy residues 713–726, 736–749, 759–772, and 820–883; these read PDED…DGTE, PDED…EGTE, and SDDE…EEEV. Residues 903-917 are compositionally biased toward basic and acidic residues; sequence GEEKGEGEKGKGREE. Gly residues-rich tracts occupy residues 922 to 1010 and 1021 to 1031; these read GGEG…GEGG and GGEGGEGGEGG. The span at 1183–1195 shows a compositional bias: basic residues; it reads RPPKHHPQTKRAQ.

This is an uncharacterized protein from Connochaetes taurinus (Blue wildebeest).